The primary structure comprises 956 residues: MAM domain-containing glycosylphosphatidylinositol anchor protein 2 (956 aa).

Residues 1–25 (MDLLYGLVWLLTVLLEGISGQGVYA) form the signal peptide. Ig-like domains are found at residues 27-127 (PTVR…IRVD) and 134-232 (PVVT…KMVS). 2 disulfide bridges follow: Cys62–Cys110 and Cys159–Cys216. N-linked (GlcNAc...) asparagine glycosylation is found at Asn92, Asn213, and Asn237. Ig-like domains follow at residues 242–328 (PSIK…NIIV), 340–436 (PDPY…VNIS), 442–533 (PNLT…ALVQ), and 540–627 (PAVE…FLVT). Cystine bridges form between Cys264–Cys310 and Cys359–Cys417. 5 N-linked (GlcNAc...) asparagine glycosylation sites follow: Asn434, Asn443, Asn504, Asn610, and Asn703. Cystine bridges form between Cys465–Cys515 and Cys561–Cys611. The Fibronectin type-III domain maps to 638–739 (DTYNPVWQNR…IRVIKYSAPV (102 aa)). An MAM domain is found at 746-921 (FHCGFEDGNI…VSIAEGECAK (176 aa)). A lipid anchor (GPI-anchor amidated aspartate) is attached at Asp931. A propeptide spans 932–956 (GAVGILVHIWLFPIIVLISILSPRR) (removed in mature form).

In terms of assembly, interacts (through the Ig-like domains) with NLGN2. Detected in Leydig cells, syncytiotrophoblast, duodenal villi epithelial cells and neutrophils from kidney and cutaneous squamous cell carcinoma (at protein level).

The protein localises to the cell membrane. In terms of biological role, may be involved in cell-cell interactions. The protein is MAM domain-containing glycosylphosphatidylinositol anchor protein 2 (MDGA2) of Homo sapiens (Human).